Consider the following 462-residue polypeptide: Alkaline phosphatase 3 (462 aa).

Residues 1–32 (MKKFPKKLLPIAVLSSIAFSSLASGSVPEASA) form the signal peptide. A Mg(2+)-binding site is contributed by aspartate 52. Aspartate 52 contacts Zn(2+). The active-site Phosphoserine intermediate is serine 101. Positions 154 and 275 each coordinate Mg(2+). Aspartate 280, histidine 284, aspartate 322, histidine 323, and histidine 419 together coordinate Zn(2+).

Belongs to the alkaline phosphatase family. Monomer. It depends on Mg(2+) as a cofactor. Zn(2+) serves as cofactor.

The enzyme catalyses a phosphate monoester + H2O = an alcohol + phosphate. This chain is Alkaline phosphatase 3 (phoB), found in Bacillus subtilis (strain 168).